Here is a 738-residue protein sequence, read N- to C-terminus: Ethylene receptor (738 aa).

Transmembrane regions (helical) follow at residues 22 to 42 (ISDF…VYFV), 53 to 73 (VLVQ…INLW), and 91 to 111 (VLTA…IPDL). The Cu cation site is built by cysteine 64 and histidine 68. In terms of domain architecture, GAF spans 157–305 (DRHTILKTTL…VVADQVAVAL (149 aa)). The 238-residue stretch at 348 to 585 (VMNHEMRTPM…TAIFIVKLGI (238 aa)) folds into the Histidine kinase domain. Position 351 is a phosphohistidine; by autocatalysis (histidine 351). Residues 613-730 (KVLIMDDNGF…KMRSVLSELL (118 aa)) enclose the Response regulatory domain. Aspartate 661 carries the post-translational modification 4-aspartylphosphate.

Belongs to the ethylene receptor family. As to quaternary structure, homodimer; disulfide-linked. The cofactor is Cu cation. In terms of processing, activation probably requires a transfer of a phosphate group between a His in the transmitter domain and an Asp of the receiver domain.

The protein localises to the endoplasmic reticulum membrane. It carries out the reaction ATP + protein L-histidine = ADP + protein N-phospho-L-histidine.. May act early in the ethylene signal transduction pathway, possibly as an ethylene receptor, or as a regulator of the pathway. The chain is Ethylene receptor (ETR1) from Nicotiana tabacum (Common tobacco).